The following is a 743-amino-acid chain: tRNA(Met) cytidine acetyltransferase TmcA (743 aa).

Residues Gln-216, 241–250 (GRGKSASIGL), and Arg-390 contribute to the ATP site. Positions 420–604 (LKIEDVSQEE…YSVIVIRALS (185 aa)) constitute an N-acetyltransferase domain. Residues 531–533 (IAV) and 538–544 (QGKGIGS) contribute to the acetyl-CoA site.

It belongs to the RNA cytidine acetyltransferase family. TmcA subfamily.

The protein resides in the cytoplasm. The catalysed reaction is cytidine(34) in elongator tRNA(Met) + acetyl-CoA + ATP + H2O = N(4)-acetylcytidine(34) in elongator tRNA(Met) + ADP + phosphate + CoA + H(+). Catalyzes the formation of N(4)-acetylcytidine (ac(4)C) at the wobble position of tRNA(Met), by using acetyl-CoA as an acetyl donor and ATP (or GTP). This chain is tRNA(Met) cytidine acetyltransferase TmcA, found in Saccharolobus islandicus (strain Y.G.57.14 / Yellowstone #1) (Sulfolobus islandicus).